The primary structure comprises 64 residues: Large ribosomal subunit protein bL33 (64 aa).

Belongs to the bacterial ribosomal protein bL33 family.

The sequence is that of Large ribosomal subunit protein bL33 from Synechococcus sp. (strain JA-2-3B'a(2-13)) (Cyanobacteria bacterium Yellowstone B-Prime).